Reading from the N-terminus, the 249-residue chain is MAQYYPGTTKVAQNRRNFCNPEYELEKLREISDEDVVKILGHRAPGEEYPSVHPPLEEMDEPEDAIREMVEPIDGAKAGDRVRYIQFTDSMYFAPAQPYVRSRAYLCRYRGADAGTLSGRQIIETRERDLEKISKELLETEFFDPARSGVRGKSVHGHSLRLDEDGMMFDMLRRQIYNKDTGRVEMVKNQIGDELDEPVDLGEPLDEETLMEKTTIYRVDGEAYRDDVEAVEIMQRIHVLRSQGGFNLE.

Coenzyme M is bound at residue R120.

The protein belongs to the methyl-coenzyme M reductase gamma subunit family. As to quaternary structure, MCR is a hexamer of two alpha, two beta, and two gamma chains, forming a dimer of heterotrimers. The cofactor is coenzyme F430.

The protein resides in the cytoplasm. The enzyme catalyses coenzyme B + methyl-coenzyme M = methane + coenzyme M-coenzyme B heterodisulfide. It participates in one-carbon metabolism; methyl-coenzyme M reduction; methane from methyl-coenzyme M: step 1/1. With respect to regulation, methyl-coenzyme M reductase activity is inhibited by 3-nitrooxypropanol (3-NOP) in vitro and in vivo, by oxidation of its active site Ni(I), which stops both growth and methanogenesis. Is also inhibited by the reaction product CoM-S-S-CoB. Component of the methyl-coenzyme M reductase (MCR) I that catalyzes the reductive cleavage of methyl-coenzyme M (CoM-S-CH3 or 2-(methylthio)ethanesulfonate) using coenzyme B (CoB or 7-mercaptoheptanoylthreonine phosphate) as reductant which results in the production of methane and the mixed heterodisulfide of CoB and CoM (CoM-S-S-CoB). This is the final step in methanogenesis. Neither N-6-mercaptohexanoylthreonine phosphate (H-S-HxoTP) nor N-8-mercaptooctanoylthreonine phosphate (H-SOcoTP) nor any other thiol compound such as CoA or CoM can substitute for CoB as the electron donor. The chain is Methyl-coenzyme M reductase I subunit gamma (mcrG) from Methanothermobacter marburgensis (strain ATCC BAA-927 / DSM 2133 / JCM 14651 / NBRC 100331 / OCM 82 / Marburg) (Methanobacterium thermoautotrophicum).